A 231-amino-acid chain; its full sequence is Probable glutathione S-transferase GSTU1 (231 aa).

A GST N-terminal domain is found at 5–84; that stretch reads KELVLLDFWV…YLDDAFPGTP (80 aa). Glutathione-binding positions include Ser15, Lys42, Ile56, and 68–69; that span reads ES. The GST C-terminal domain occupies 97 to 220; sequence AAYARATARF…LPSPEKVYDF (124 aa).

This sequence belongs to the GST superfamily. Tau family.

It carries out the reaction RX + glutathione = an S-substituted glutathione + a halide anion + H(+). In terms of biological role, conjugation of reduced glutathione to a wide number of exogenous and endogenous hydrophobic electrophiles. This Oryza sativa subsp. japonica (Rice) protein is Probable glutathione S-transferase GSTU1 (GSTU1).